Consider the following 314-residue polypeptide: tRNA(Ile)-lysidine synthase (314 aa).

Position 37–42 (37–42) interacts with ATP; that stretch reads SGGPDS.

This sequence belongs to the tRNA(Ile)-lysidine synthase family.

Its subcellular location is the cytoplasm. It carries out the reaction cytidine(34) in tRNA(Ile2) + L-lysine + ATP = lysidine(34) in tRNA(Ile2) + AMP + diphosphate + H(+). Its function is as follows. Ligates lysine onto the cytidine present at position 34 of the AUA codon-specific tRNA(Ile) that contains the anticodon CAU, in an ATP-dependent manner. Cytidine is converted to lysidine, thus changing the amino acid specificity of the tRNA from methionine to isoleucine. This Corynebacterium glutamicum (strain ATCC 13032 / DSM 20300 / JCM 1318 / BCRC 11384 / CCUG 27702 / LMG 3730 / NBRC 12168 / NCIMB 10025 / NRRL B-2784 / 534) protein is tRNA(Ile)-lysidine synthase.